A 94-amino-acid polypeptide reads, in one-letter code: UPF0358 protein Bcer98_2651 (94 aa).

The protein belongs to the UPF0358 family.

The sequence is that of UPF0358 protein Bcer98_2651 from Bacillus cytotoxicus (strain DSM 22905 / CIP 110041 / 391-98 / NVH 391-98).